The primary structure comprises 476 residues: tRNA(Ile)-lysidine synthase (476 aa).

Residue 30-35 (SGGPDS) participates in ATP binding.

It belongs to the tRNA(Ile)-lysidine synthase family.

Its subcellular location is the cytoplasm. The enzyme catalyses cytidine(34) in tRNA(Ile2) + L-lysine + ATP = lysidine(34) in tRNA(Ile2) + AMP + diphosphate + H(+). In terms of biological role, ligates lysine onto the cytidine present at position 34 of the AUA codon-specific tRNA(Ile) that contains the anticodon CAU, in an ATP-dependent manner. Cytidine is converted to lysidine, thus changing the amino acid specificity of the tRNA from methionine to isoleucine. This chain is tRNA(Ile)-lysidine synthase, found in Bacillus anthracis.